Here is a 505-residue protein sequence, read N- to C-terminus: Flagellin (505 aa).

It belongs to the bacterial flagellin family.

It localises to the secreted. The protein localises to the bacterial flagellum. In terms of biological role, flagellin is the subunit protein which polymerizes to form the filaments of bacterial flagella. In Salmonella enteritidis, this protein is Flagellin (fliC).